A 207-amino-acid polypeptide reads, in one-letter code: Imidazole glycerol phosphate synthase subunit HisH (207 aa).

One can recognise a Glutamine amidotransferase type-1 domain in the interval 1–206 (MMIVIDYDAG…KEYVYENTAR (206 aa)). The active-site Nucleophile is the Cys-79. Catalysis depends on residues His-181 and Glu-183.

As to quaternary structure, heterodimer of HisH and HisF.

It localises to the cytoplasm. It carries out the reaction 5-[(5-phospho-1-deoxy-D-ribulos-1-ylimino)methylamino]-1-(5-phospho-beta-D-ribosyl)imidazole-4-carboxamide + L-glutamine = D-erythro-1-(imidazol-4-yl)glycerol 3-phosphate + 5-amino-1-(5-phospho-beta-D-ribosyl)imidazole-4-carboxamide + L-glutamate + H(+). The enzyme catalyses L-glutamine + H2O = L-glutamate + NH4(+). The protein operates within amino-acid biosynthesis; L-histidine biosynthesis; L-histidine from 5-phospho-alpha-D-ribose 1-diphosphate: step 5/9. In terms of biological role, IGPS catalyzes the conversion of PRFAR and glutamine to IGP, AICAR and glutamate. The HisH subunit catalyzes the hydrolysis of glutamine to glutamate and ammonia as part of the synthesis of IGP and AICAR. The resulting ammonia molecule is channeled to the active site of HisF. This is Imidazole glycerol phosphate synthase subunit HisH from Streptococcus sanguinis (strain SK36).